We begin with the raw amino-acid sequence, 154 residues long: tRNA (cytidine(34)-2'-O)-methyltransferase (154 aa).

S-adenosyl-L-methionine-binding residues include leucine 78, glycine 100, isoleucine 122, and serine 130.

This sequence belongs to the class IV-like SAM-binding methyltransferase superfamily. RNA methyltransferase TrmH family. TrmL subfamily. In terms of assembly, homodimer.

It localises to the cytoplasm. The enzyme catalyses cytidine(34) in tRNA + S-adenosyl-L-methionine = 2'-O-methylcytidine(34) in tRNA + S-adenosyl-L-homocysteine + H(+). It catalyses the reaction 5-carboxymethylaminomethyluridine(34) in tRNA(Leu) + S-adenosyl-L-methionine = 5-carboxymethylaminomethyl-2'-O-methyluridine(34) in tRNA(Leu) + S-adenosyl-L-homocysteine + H(+). Functionally, methylates the ribose at the nucleotide 34 wobble position in the two leucyl isoacceptors tRNA(Leu)(CmAA) and tRNA(Leu)(cmnm5UmAA). Catalyzes the methyl transfer from S-adenosyl-L-methionine to the 2'-OH of the wobble nucleotide. This Saccharophagus degradans (strain 2-40 / ATCC 43961 / DSM 17024) protein is tRNA (cytidine(34)-2'-O)-methyltransferase.